We begin with the raw amino-acid sequence, 328 residues long: P2Y purinoceptor 6 (328 aa).

At 1-27 (MERDNGTIQAPGLPPTTCVYREDFKRL) the chain is on the extracellular side. N-linked (GlcNAc...) asparagine glycosylation is present at asparagine 5. The helical transmembrane segment at 28–48 (LLPPVYSVVLVVGLPLNVCVI) threads the bilayer. Over 49-62 (AQICASRRTLTRSA) the chain is Cytoplasmic. The helical transmembrane segment at 63-83 (VYTLNLALADLLYACSLPLLI) threads the bilayer. At 84-101 (YNYARGDHWPFGDLACRL) the chain is on the extracellular side. Cysteines 99 and 177 form a disulfide. A helical transmembrane segment spans residues 102 to 122 (VRFLFYANLHGSILFLTCISF). Over 123–144 (QRYLGICHPLAPWHKRGGRRAA) the chain is Cytoplasmic. The chain crosses the membrane as a helical span at residues 145-165 (WVVCGVVWLVVTAQCLPTAVF). The Extracellular segment spans residues 166-194 (AATGIQRNRTVCYDLSPPILSTRYLPYGM). An N-linked (GlcNAc...) asparagine glycan is attached at asparagine 173. A helical transmembrane segment spans residues 195-215 (ALTVIGFLLPFTALLACYCRM). Over 216-236 (ARRLCRQDGPAGPVAQERRSK) the chain is Cytoplasmic. A helical membrane pass occupies residues 237 to 257 (AARMAVVVAAVFVISFLPFHI). The Extracellular portion of the chain corresponds to 258–280 (TKTAYLAVRSTPGVSCPVLETFA). A helical membrane pass occupies residues 281 to 303 (AAYKGTRPFASANSVLDPILFYF). Residues 304-328 (TQQKFRRQPHDLLQKLTAKWQRQRV) are Cytoplasmic-facing.

The protein belongs to the G-protein coupled receptor 1 family. Abundantly expressed in various tissues including lung, stomach, intestine, spleen, mesentery, heart, and, most prominently, aorta.

The protein localises to the cell membrane. In terms of biological role, receptor for extracellular UTP &gt; ADP = 2-methylthio-ATP &gt; ADP-beta-S &gt; ATP = ATP-gamma-S. The activity of this receptor is mediated by G proteins which activate a phosphatidylinositol-calcium second messenger system. Functionally coupled to phospholipase C. This chain is P2Y purinoceptor 6 (P2ry6), found in Rattus norvegicus (Rat).